A 478-amino-acid chain; its full sequence is Cytochrome c-552 (478 aa).

A signal peptide spans 1–26 (MARTILRARRFFSLILPFFFISSVYA). H94 serves as a coordination point for heme c. Positions 122, 125, and 126 each coordinate heme. Residues C160, C163, H164, C209, C212, and H213 each contribute to the heme c site. 4 residues coordinate Ca(2+): E215, Y216, K261, and Q263. Residue Y216 coordinates substrate. H264 is a substrate binding site. H275, C282, C285, H286, H301, C314, C317, H318, and H393 together coordinate heme c.

This sequence belongs to the cytochrome c-552 family. The cofactor is Ca(2+). Heme c is required as a cofactor.

The protein localises to the periplasm. It carries out the reaction 6 Fe(III)-[cytochrome c] + NH4(+) + 2 H2O = 6 Fe(II)-[cytochrome c] + nitrite + 8 H(+). It functions in the pathway nitrogen metabolism; nitrate reduction (assimilation). In terms of biological role, catalyzes the reduction of nitrite to ammonia, consuming six electrons in the process. The protein is Cytochrome c-552 of Citrobacter koseri (strain ATCC BAA-895 / CDC 4225-83 / SGSC4696).